The following is a 196-amino-acid chain: Probable cobalt-precorrin-6B C(15)-methyltransferase (decarboxylating) (196 aa).

S-adenosyl-L-methionine is bound by residues threonine 24, glycine 48–glycine 52, aspartate 72, and alanine 101.

This sequence belongs to the methyltransferase superfamily. Archaeal-type CbiT family.

The catalysed reaction is Co-precorrin-6B + S-adenosyl-L-methionine = Co-precorrin-7 + S-adenosyl-L-homocysteine + CO2. It participates in cofactor biosynthesis; adenosylcobalamin biosynthesis; cob(II)yrinate a,c-diamide from sirohydrochlorin (anaerobic route): step 8/10. Catalyzes the methylation of C-15 in cobalt-precorrin-6B followed by the decarboxylation of C-12 to form cobalt-precorrin-7. The protein is Probable cobalt-precorrin-6B C(15)-methyltransferase (decarboxylating) of Pyrobaculum aerophilum (strain ATCC 51768 / DSM 7523 / JCM 9630 / CIP 104966 / NBRC 100827 / IM2).